A 93-amino-acid chain; its full sequence is Cobalt transport protein CbiN (93 aa).

The next 2 membrane-spanning stretches (helical) occupy residues 5 to 25 (LMLL…NHGG) and 63 to 83 (LLFT…LGYC).

The protein belongs to the CbiN family. In terms of assembly, forms an energy-coupling factor (ECF) transporter complex composed of an ATP-binding protein (A component, CbiO), a transmembrane protein (T component, CbiQ) and 2 possible substrate-capture proteins (S components, CbiM and CbiN) of unknown stoichimetry.

The protein resides in the cell inner membrane. Its pathway is cofactor biosynthesis; adenosylcobalamin biosynthesis. Part of the energy-coupling factor (ECF) transporter complex CbiMNOQ involved in cobalt import. This is Cobalt transport protein CbiN from Salmonella gallinarum (strain 287/91 / NCTC 13346).